The following is a 282-amino-acid chain: ATP phosphoribosyltransferase (282 aa).

This sequence belongs to the ATP phosphoribosyltransferase family. Long subfamily. Mg(2+) serves as cofactor.

Its subcellular location is the cytoplasm. The catalysed reaction is 1-(5-phospho-beta-D-ribosyl)-ATP + diphosphate = 5-phospho-alpha-D-ribose 1-diphosphate + ATP. The protein operates within amino-acid biosynthesis; L-histidine biosynthesis; L-histidine from 5-phospho-alpha-D-ribose 1-diphosphate: step 1/9. With respect to regulation, feedback inhibited by histidine. Its function is as follows. Catalyzes the condensation of ATP and 5-phosphoribose 1-diphosphate to form N'-(5'-phosphoribosyl)-ATP (PR-ATP). Has a crucial role in the pathway because the rate of histidine biosynthesis seems to be controlled primarily by regulation of HisG enzymatic activity. The protein is ATP phosphoribosyltransferase of Pyrobaculum islandicum (strain DSM 4184 / JCM 9189 / GEO3).